Here is a 122-residue protein sequence, read N- to C-terminus: Small ribosomal subunit protein uS13 (122 aa).

A disordered region spans residues 95–122 (QLPVRGQRTHTNARTRKGKAKPIAGKKK).

Belongs to the universal ribosomal protein uS13 family. In terms of assembly, part of the 30S ribosomal subunit. Forms a loose heterodimer with protein S19. Forms two bridges to the 50S subunit in the 70S ribosome.

Functionally, located at the top of the head of the 30S subunit, it contacts several helices of the 16S rRNA. In the 70S ribosome it contacts the 23S rRNA (bridge B1a) and protein L5 of the 50S subunit (bridge B1b), connecting the 2 subunits; these bridges are implicated in subunit movement. Contacts the tRNAs in the A and P-sites. The sequence is that of Small ribosomal subunit protein uS13 from Beijerinckia indica subsp. indica (strain ATCC 9039 / DSM 1715 / NCIMB 8712).